The sequence spans 47 residues: Defensin NsD7 (47 aa).

4 disulfide bridges follow: Cys3–Cys47, Cys14–Cys34, Cys20–Cys41, and Cys24–Cys43. The a 1,2-diacyl-sn-glycero-3-phosphate site is built by Lys4, His33, Lys36, and Arg39.

The protein belongs to the DEFL family. In terms of assembly, in the presence of phosphatidic acid (PA), forms right-handed double helices which tend to bundle into fibrils. Each helix is a repetition of dimers containing 2 bound molecules of PA per dimer. Dimers are arranged orthogonally in a tip-to-tip configuration with 1 molecule of PA located at the dimer contact interface. Association of 2 helices to form a double helix depends on intercalating isoleucine residues Ile-15 and Ile-37. Bundling of double helices into fibrils depends on Arg-26.

Its subcellular location is the vacuole. In terms of biological role, plant defense peptide. Disrupts membranes containing phosphatidic acid (PA) via a PA-dependent oligomerization process. The polypeptide is Defensin NsD7 (Nicotiana suaveolens (Australian tobacco)).